The following is a 315-amino-acid chain: Aspartate carbamoyltransferase catalytic subunit (315 aa).

The carbamoyl phosphate site is built by Arg-55 and Thr-56. Residue Lys-83 coordinates L-aspartate. Arg-105, His-138, and Gln-141 together coordinate carbamoyl phosphate. Positions 171 and 225 each coordinate L-aspartate. Residues Gly-266 and Pro-267 each contribute to the carbamoyl phosphate site.

The protein belongs to the aspartate/ornithine carbamoyltransferase superfamily. ATCase family. As to quaternary structure, heterododecamer (2C3:3R2) of six catalytic PyrB chains organized as two trimers (C3), and six regulatory PyrI chains organized as three dimers (R2).

It catalyses the reaction carbamoyl phosphate + L-aspartate = N-carbamoyl-L-aspartate + phosphate + H(+). It functions in the pathway pyrimidine metabolism; UMP biosynthesis via de novo pathway; (S)-dihydroorotate from bicarbonate: step 2/3. Catalyzes the condensation of carbamoyl phosphate and aspartate to form carbamoyl aspartate and inorganic phosphate, the committed step in the de novo pyrimidine nucleotide biosynthesis pathway. This chain is Aspartate carbamoyltransferase catalytic subunit, found in Mycolicibacterium gilvum (strain PYR-GCK) (Mycobacterium gilvum (strain PYR-GCK)).